Consider the following 435-residue polypeptide: Proline and serine-rich protein 2 (435 aa).

Residues 1 to 10 are compositionally biased toward basic and acidic residues; that stretch reads MPVTHRKSDA. The interval 1 to 22 is disordered; sequence MPVTHRKSDASDMNSDTSPSCR. At serine 8 the chain carries Phosphoserine. The span at 11 to 20 shows a compositional bias: polar residues; it reads SDMNSDTSPS. Serine 43 is modified (phosphoserine). Threonine 45 bears the Phosphothreonine mark. Composition is skewed to low complexity over residues 92–102 and 113–126; these read PSLEESTSSPS and PAPG…LPEG. Disordered stretches follow at residues 92–276 and 295–420; these read PSLE…RAAV and AFPA…SEEA. Threonine 146 is subject to Phosphothreonine. Pro residues predominate over residues 146-169; it reads TPPPPDPPAPETLLAPPPLPSTPD. Serine 166 is subject to Phosphoserine. At threonine 167 the chain carries Phosphothreonine. Phosphoserine is present on residues serine 179, serine 212, and serine 215. The span at 228 to 237 shows a compositional bias: low complexity; it reads PAARGPRSGD. Arginine 252 bears the Asymmetric dimethylarginine; alternate mark. An Omega-N-methylarginine; alternate modification is found at arginine 252. The span at 302–311 shows a compositional bias: gly residues; the sequence is AGEGAPGGGS. Serine 312 is subject to Phosphoserine. Arginine 320 carries the post-translational modification Omega-N-methylarginine; alternate. Residue arginine 320 is modified to Dimethylated arginine; alternate. Position 378 is an omega-N-methylarginine (arginine 378). At serine 400 the chain carries Phosphoserine. An Omega-N-methylarginine modification is found at arginine 414.

This chain is Proline and serine-rich protein 2 (PROSER2), found in Homo sapiens (Human).